Consider the following 197-residue polypeptide: Chitin synthase 3 (197 aa).

Belongs to the chitin synthase family. Class III subfamily.

The protein resides in the cell membrane. The catalysed reaction is [(1-&gt;4)-N-acetyl-beta-D-glucosaminyl](n) + UDP-N-acetyl-alpha-D-glucosamine = [(1-&gt;4)-N-acetyl-beta-D-glucosaminyl](n+1) + UDP + H(+). Its function is as follows. Polymerizes chitin, a structural polymer of the cell wall and septum, by transferring the sugar moiety of UDP-GlcNAc to the non-reducing end of the growing chitin polymer. The sequence is that of Chitin synthase 3 (CHS3) from Exophiala jeanselmei (Dematiaceous fungus).